Here is a 281-residue protein sequence, read N- to C-terminus: UPF0294 protein VP2298 (281 aa).

Belongs to the UPF0294 family.

The protein resides in the cytoplasm. In Vibrio parahaemolyticus serotype O3:K6 (strain RIMD 2210633), this protein is UPF0294 protein VP2298.